We begin with the raw amino-acid sequence, 197 residues long: Protein lin-7 homolog C (197 aa).

Ala2 is subject to N-acetylalanine. The Kinase interacting site signature appears at 2–13; that stretch reads AALGEPVRLERD. The L27 domain maps to 10–65; sequence LERDICRAIELLEKLQRSGEVPPQKLQALQRVLQSEFCNAVREVYEHVYETVDISS. The PDZ domain occupies 93-175; that stretch reads VVELPKTEEG…KVKLVVRYTP (83 aa).

This sequence belongs to the lin-7 family. As to quaternary structure, forms a complex with CASK and APBA1 or CASKIN1. Component of the brain-specific heterotrimeric complex (LIN-10-LIN-2-LIN-7 complex) composed of at least APBA1, CASK, and LIN7, which associates with the motor protein KIF17 to transport vesicles along microtubules. Can also interact with other modular proteins containing protein-protein interaction domains like PALS1, PALS2, MPP7, DLG1, DLG2 and DLG3 through its L27 domain. Interacts with DLG4 and GRIN2B as well as CDH1 and CTNNB1, the channels KCNJ12/Kir2.2, KCNJ4/Kir2.3 and probably KCNJ2/Kir2.1 and SLC6A12/BGT-1 via its PDZ domain. The association of LIN7A with cadherin and beta-catenin is calcium-dependent, occurs at synaptic junctions and requires the actin cytoskeleton. Interacts with EGFR, ERBB2, ERBB3 and ERBB4 with both PDZ and KID domains. Associates with KIF17 via APBA1. Interacts with HTR4. Forms a tripartite complex composed of DLG1, MPP7 and LIN7 (LIN7A or LIN7C). Interacts with MAPK12.

The protein resides in the cell membrane. It is found in the basolateral cell membrane. It localises to the cell junction. Its subcellular location is the postsynaptic density membrane. The protein localises to the tight junction. The protein resides in the synapse. It is found in the synaptosome. Plays a role in establishing and maintaining the asymmetric distribution of channels and receptors at the plasma membrane of polarized cells. Forms membrane-associated multiprotein complexes that may regulate delivery and recycling of proteins to the correct membrane domains. The tripartite complex composed of LIN7 (LIN7A, LIN7B or LIN7C), CASK and APBA1 associates with the motor protein KIF17 to transport vesicles containing N-methyl-D-aspartate (NMDA) receptor subunit NR2B along microtubules. This complex may have the potential to couple synaptic vesicle exocytosis to cell adhesion in brain. Ensures the proper localization of GRIN2B (subunit 2B of the NMDA receptor) to neuronal postsynaptic density and may function in localizing synaptic vesicles at synapses where it is recruited by beta-catenin and cadherin. Required to localize Kir2 channels, GABA transporter (SLC6A12) and EGFR/ERBB1, ERBB2, ERBB3 and ERBB4 to the basolateral membrane of epithelial cells. This chain is Protein lin-7 homolog C (LIN7C), found in Bos taurus (Bovine).